Consider the following 778-residue polypeptide: Probable protein kinase DDB_G0291133 (778 aa).

The interval 129–162 is disordered; it reads LSINNNNNNNNNNGGYKIPSSVNKNSNNYNSNSN. Positions 177 to 462 constitute a Protein kinase domain; that stretch reads FDVVCKLGSG…LDQILLNENI (286 aa). Residues 183 to 191 and K206 contribute to the ATP site; that span reads LGSGSFSDV. The active-site Proton acceptor is the D303. 2 residues coordinate Mg(2+): N308 and D321. Disordered stretches follow at residues 478-509, 562-697, and 757-778; these read NIEN…DDNN, HFVR…GFYG, and SHPQ…QETN. Residues 578 to 590 show a composition bias toward acidic residues; sequence SDEEEDDDDDDDS. Residues 599-651 are compositionally biased toward low complexity; it reads SLNNLNNSSSNIGISESNSNNSFSSILEENNESSSSSPLPSLSFSRRLSTSSL. Residues 652–670 show a composition bias toward polar residues; that stretch reads VTTISPKPNFNTSGNKLFS. Low complexity predominate over residues 671 to 693; the sequence is NENNNSNNNNNNNNNNQNNNNNN. A compositionally biased stretch (basic and acidic residues) spans 757-766; it reads SHPQESDKMS.

It belongs to the protein kinase superfamily. Ser/Thr protein kinase family. WEE1 subfamily.

The enzyme catalyses L-seryl-[protein] + ATP = O-phospho-L-seryl-[protein] + ADP + H(+). It catalyses the reaction L-threonyl-[protein] + ATP = O-phospho-L-threonyl-[protein] + ADP + H(+). This chain is Probable protein kinase DDB_G0291133, found in Dictyostelium discoideum (Social amoeba).